Consider the following 244-residue polypeptide: Lipoprotein-releasing system ATP-binding protein LolD (244 aa).

One can recognise an ABC transporter domain in the interval 19–244 (IRAEALAKTY…KLRELAPSAV (226 aa)). 55–62 (GASGAGKS) contacts ATP.

It belongs to the ABC transporter superfamily. Lipoprotein translocase (TC 3.A.1.125) family. In terms of assembly, the complex is composed of two ATP-binding proteins (LolD) and two transmembrane proteins (LolC and LolE).

The protein resides in the cell inner membrane. Its function is as follows. Part of the ABC transporter complex LolCDE involved in the translocation of mature outer membrane-directed lipoproteins, from the inner membrane to the periplasmic chaperone, LolA. Responsible for the formation of the LolA-lipoprotein complex in an ATP-dependent manner. This chain is Lipoprotein-releasing system ATP-binding protein LolD, found in Xanthomonas axonopodis pv. citri (strain 306).